A 366-amino-acid polypeptide reads, in one-letter code: uncharacterized protein (366 aa).

Residues 59–222 (LNILHGIGET…LYDTPGIINN (164 aa)) enclose the CP-type G domain.

Belongs to the TRAFAC class YlqF/YawG GTPase family.

Functionally, binds GTP and GDP. This is an uncharacterized protein from Bacillus subtilis (strain 168).